Consider the following 264-residue polypeptide: Thymidylate synthase (264 aa).

DUMP is bound at residue Arg-21. Position 51 (His-51) interacts with (6R)-5,10-methylene-5,6,7,8-tetrahydrofolate. Residue 126–127 coordinates dUMP; the sequence is RR. The active-site Nucleophile is Cys-146. DUMP is bound by residues 166–169, Asn-177, and 207–209; these read RSCD and HLY. Asp-169 is a binding site for (6R)-5,10-methylene-5,6,7,8-tetrahydrofolate. A (6R)-5,10-methylene-5,6,7,8-tetrahydrofolate-binding site is contributed by Ala-263.

The protein belongs to the thymidylate synthase family. Bacterial-type ThyA subfamily. Homodimer.

It is found in the cytoplasm. The catalysed reaction is dUMP + (6R)-5,10-methylene-5,6,7,8-tetrahydrofolate = 7,8-dihydrofolate + dTMP. It participates in pyrimidine metabolism; dTTP biosynthesis. Functionally, catalyzes the reductive methylation of 2'-deoxyuridine-5'-monophosphate (dUMP) to 2'-deoxythymidine-5'-monophosphate (dTMP) while utilizing 5,10-methylenetetrahydrofolate (mTHF) as the methyl donor and reductant in the reaction, yielding dihydrofolate (DHF) as a by-product. This enzymatic reaction provides an intracellular de novo source of dTMP, an essential precursor for DNA biosynthesis. In Salmonella paratyphi C (strain RKS4594), this protein is Thymidylate synthase.